Reading from the N-terminus, the 261-residue chain is tRNA pseudouridine synthase A (261 aa).

Asp-52 serves as the catalytic Nucleophile. Tyr-110 provides a ligand contact to substrate.

It belongs to the tRNA pseudouridine synthase TruA family. In terms of assembly, homodimer.

It catalyses the reaction uridine(38/39/40) in tRNA = pseudouridine(38/39/40) in tRNA. Functionally, formation of pseudouridine at positions 38, 39 and 40 in the anticodon stem and loop of transfer RNAs. This Coxiella burnetii (strain CbuK_Q154) (Coxiella burnetii (strain Q154)) protein is tRNA pseudouridine synthase A.